A 224-amino-acid polypeptide reads, in one-letter code: Response regulator protein GraR (224 aa).

The Response regulatory domain maps to 2–115 (QILLVEDDNT…VLIAKLQAIY (114 aa)). A 4-aspartylphosphate modification is found at Asp51. The ompR/PhoB-type DNA-binding region spans 126–224 (KRTLTWQDAV…KVGKGYMAHE (99 aa)). 3 positions are modified to phosphothreonine: Thr128, Thr130, and Thr149.

As to quaternary structure, interacts with GraX. Phosphorylated by GraS. Phosphorylated by Stk1; phosphorylation increases the DNA-binding activity of GraR.

Its subcellular location is the cytoplasm. Member of the two-component regulatory system GraR/GraS involved in resistance against cationic antimicrobial peptides (CAMPs). Upon phosphorylation by GraS, functions as a transcription regulator by direct binding to promoter regions of target genes such as adhesins, exoproteins, transporters, toxins, and proteins involved in cell wall synthesis. Down-regulates the expression of many genes involved in RNA and amino acid synthesis or glycolysis. In Staphylococcus aureus (strain Mu3 / ATCC 700698), this protein is Response regulator protein GraR (graR).